The following is a 62-amino-acid chain: MTIAFQLAVFALIATSSILLISVPVVFASPDGWLSNKNIVFSGTSLWIGLVFLVGILNSLIS.

Helical transmembrane passes span 8-28 (AVFA…VVFA) and 41-61 (FSGT…NSLI).

It belongs to the PsbZ family. As to quaternary structure, PSII is composed of 1 copy each of membrane proteins PsbA, PsbB, PsbC, PsbD, PsbE, PsbF, PsbH, PsbI, PsbJ, PsbK, PsbL, PsbM, PsbT, PsbY, PsbZ, Psb30/Ycf12, at least 3 peripheral proteins of the oxygen-evolving complex and a large number of cofactors. It forms dimeric complexes.

The protein resides in the plastid. It is found in the chloroplast thylakoid membrane. In terms of biological role, may control the interaction of photosystem II (PSII) cores with the light-harvesting antenna, regulates electron flow through the 2 photosystem reaction centers. PSII is a light-driven water plastoquinone oxidoreductase, using light energy to abstract electrons from H(2)O, generating a proton gradient subsequently used for ATP formation. The chain is Photosystem II reaction center protein Z from Gossypium barbadense (Sea Island cotton).